Reading from the N-terminus, the 282-residue chain is Shikimate dehydrogenase (NADP(+)) (282 aa).

Residues 18-20 and T65 each bind shikimate; that span reads SRS. Catalysis depends on K69, which acts as the Proton acceptor. E81 contacts NADP(+). The shikimate site is built by N90 and D105. Residues 130 to 134, 154 to 159, and M222 each bind NADP(+); these read GAGGA and NRTPAR. Y224 is a binding site for shikimate. NADP(+) is bound at residue G245.

It belongs to the shikimate dehydrogenase family. As to quaternary structure, homodimer.

It catalyses the reaction shikimate + NADP(+) = 3-dehydroshikimate + NADPH + H(+). Its pathway is metabolic intermediate biosynthesis; chorismate biosynthesis; chorismate from D-erythrose 4-phosphate and phosphoenolpyruvate: step 4/7. In terms of biological role, involved in the biosynthesis of the chorismate, which leads to the biosynthesis of aromatic amino acids. Catalyzes the reversible NADPH linked reduction of 3-dehydroshikimate (DHSA) to yield shikimate (SA). The chain is Shikimate dehydrogenase (NADP(+)) from Acidovorax ebreus (strain TPSY) (Diaphorobacter sp. (strain TPSY)).